Reading from the N-terminus, the 919-residue chain is UPF0182 protein Tery_4385 (919 aa).

Helical transmembrane passes span 6 to 26 (YIII…RTLV), 52 to 72 (IFLW…NYWI), 96 to 116 (IFVK…AATA), 160 to 180 (WLFT…ALKG), 198 to 218 (THIS…FWFE), 243 to 263 (FAYW…VLSV), and 268 to 288 (IIWP…FNVL).

This sequence belongs to the UPF0182 family.

The protein localises to the cell membrane. In Trichodesmium erythraeum (strain IMS101), this protein is UPF0182 protein Tery_4385.